The chain runs to 789 residues: MLDTKYPEIIPGPPKPSAILQPRVFSLPPGTERYVVPGAGAILLRLETGDRIEIENTEGGQPCEIVCADLLGGFDAGLIGARAQGAPSGLMALLTSDDPSLRGLRMGIEARGLNLSQAGAVHLFEHSTPAGTTESFTASREGIVIIAAPGGIMDFQAQDTATPLTVFIRRAVLKSAARFELPDPLADPVADIRVHSATAEAYFVKAGDYIQILDVDGRQCTDFQCFAARKLDKGIAHALDVTTTRTLMGHAYPMPGLHAKYYDQEMQPLVEVIQDTCGRHDAFALACAAKYYDDIGYPGHINCSDNFNAALAPHGVAGRAGWMAINFFFNTGLDDHGVMYADEPWSRPGDYVLLRALTDLVCVSSACPDDTSAANGWNPTDIHVRTYSGKETFQRAVAYRPTPDAEPKMTKQTGFHDRFARFTENFIEYNGFWLANCMSTAGPIEEYHACREKCVVLDLSALRKFEITGPDSEALCQYIFTRNMKTLPVGGVVYTAMCYPHGGMIDDGTVFRLGKDNFRWIGGSDYGGEWIREKAAELGLKVLVRSSTDMQHNIAVQGPESRELLKKVIWTAPHQPKFEELGWFRFAPARIGDDQGVPVVVSRTGYTGELGYEIFCHPKHAGAVFDAVWEAGQAHGIRPMGLEALDMVRIEAGLIFAGYDFSDQTDPFEAGIGFTVPLKSKPDDFIGREALIRRKEHPARVLVGLDIDSNVDVGHGDCVHIGRAQIGEVTSSMRSPILGKNIALARVDVAHHEVGTRVEIGKLDGHQKRLPATIVPFAHYDPQKTRPRS.

It in the C-terminal section; belongs to the GcvT family.

It catalyses the reaction trimethylamine N-oxide + H(+) = dimethylamine + formaldehyde. Catalyzes the conversion of trimethylamine N-oxide (TMAO) to dimethylamine (DMA) and formaldehyde. This chain is Trimethylamine-oxide aldolase, found in Ruegeria pomeroyi (strain ATCC 700808 / DSM 15171 / DSS-3) (Silicibacter pomeroyi).